Here is a 134-residue protein sequence, read N- to C-terminus: Large ribosomal subunit protein eL32 (134 aa).

Belongs to the eukaryotic ribosomal protein eL32 family.

The protein is Large ribosomal subunit protein eL32 (RPL32) of Tetrahymena thermophila (strain SB210).